The primary structure comprises 593 residues: SPI-1 type 3 secretion system translocon protein SctE (593 aa).

Coiled-coil stretches lie at residues 151–208 (DTAK…ATDA) and 287–314 (EGRQ…NRIM). 2 helical membrane-spanning segments follow: residues 330 to 350 (VVAA…GLAV) and 409 to 429 (IVGA…VAVV).

This sequence belongs to the SctE/SipB/YopB family. In terms of assembly, the core secretion machinery of the T3SS is composed of approximately 20 different proteins, including cytoplasmic components, a base, an export apparatus and a needle. This subunit is involved in the formation of a pore, called the translocon, in host membrane.

It localises to the secreted. Its subcellular location is the host membrane. It is found in the host cell. Its function is as follows. Component of the type III secretion system 1 (SPI-1 T3SS), also called injectisome, which is used to inject bacterial effector proteins into eukaryotic host cells. SipB/SctE1 and SipC/SctB are inserted into the host membrane where they form a pore and allow the translocation of effector proteins into the cytosol of target cells. Functionally, induces macrophage apoptosis either by binding and activating the proapoptotic enzyme caspase-1 (caspase-1 dependent), resulting in the release of interleukin-1 beta active form, or by disrupting mitochondria and inducing autophagy (caspase-1 independent). The former is dependent of its membrane-fusion activity. This is SPI-1 type 3 secretion system translocon protein SctE from Salmonella typhi.